The primary structure comprises 305 residues: Tyrosine recombinase XerC (305 aa).

The Core-binding (CB) domain occupies threonine 4 to glutamate 95. In terms of domain architecture, Tyr recombinase spans leucine 116–valine 298. Residues arginine 159, lysine 182, histidine 250, arginine 253, and histidine 276 contribute to the active site. The O-(3'-phospho-DNA)-tyrosine intermediate role is filled by tyrosine 285.

Belongs to the 'phage' integrase family. XerC subfamily. In terms of assembly, forms a cyclic heterotetrameric complex composed of two molecules of XerC and two molecules of XerD.

The protein localises to the cytoplasm. Site-specific tyrosine recombinase, which acts by catalyzing the cutting and rejoining of the recombining DNA molecules. The XerC-XerD complex is essential to convert dimers of the bacterial chromosome into monomers to permit their segregation at cell division. It also contributes to the segregational stability of plasmids. The polypeptide is Tyrosine recombinase XerC (Rickettsia bellii (strain RML369-C)).